Reading from the N-terminus, the 251-residue chain is Coproheme decarboxylase (251 aa).

Fe-coproporphyrin III is bound by residues arginine 133, 147–151, histidine 174, glutamine 187, and serine 225; that span reads YPMSK. Tyrosine 147 is an active-site residue.

Belongs to the ChdC family. Type 1 subfamily. Homopentamer. Homohexamer in solution. It depends on Fe-coproporphyrin III as a cofactor.

The catalysed reaction is Fe-coproporphyrin III + 2 H2O2 + 2 H(+) = heme b + 2 CO2 + 4 H2O. It catalyses the reaction Fe-coproporphyrin III + H2O2 + H(+) = harderoheme III + CO2 + 2 H2O. The enzyme catalyses harderoheme III + H2O2 + H(+) = heme b + CO2 + 2 H2O. It functions in the pathway porphyrin-containing compound metabolism; protoheme biosynthesis. Its function is as follows. Involved in coproporphyrin-dependent heme b biosynthesis. Catalyzes the decarboxylation of Fe-coproporphyrin III (coproheme) to heme b (protoheme IX), the last step of the pathway. The reaction occurs in a stepwise manner with a three-propionate intermediate. In Listeria monocytogenes serovar 1/2a (strain ATCC BAA-679 / EGD-e), this protein is Coproheme decarboxylase.